We begin with the raw amino-acid sequence, 418 residues long: Deubiquitinase and deneddylase Dub1 (418 aa).

Residues 1–10 (MLSPTNSISK) show a composition bias toward polar residues. The segment at 1-23 (MLSPTNSISKTAPVPPQDSSKPV) is disordered. A helical transmembrane segment spans residues 40 to 60 (TALAVLLVVVTLGLILLFYSF). The disordered stretch occupies residues 72-144 (TRPSTKEQPT…PLPPKAPKPV (73 aa)). Positions 86–141 (VPLPSPPLAVPRPSTPPPPVISRPSTPPAPTPAISPPSTPSAPKPSTPPPLPPKAP) are enriched in pro residues. Active-site residues include His288, Asp305, and Cys358.

It belongs to the peptidase C48 family.

It is found in the secreted. The protein resides in the host cell. Its subcellular location is the membrane. Functionally, effector proteins function to alter host cell physiology and promote bacterial survival in host tissues. This protease possesses deubiquitinating and deneddylating activities. This is Deubiquitinase and deneddylase Dub1 (cdu1) from Chlamydia trachomatis serovar B (strain Jali20/OT).